The sequence spans 168 residues: Ecotin (168 aa).

An N-terminal signal peptide occupies residues 1–21 (MKRLSIAITSLLMAASASTIA). A disulfide bridge links Cys-76 with Cys-113.

It belongs to the protease inhibitor I11 (ecotin) family. Homodimer.

It localises to the periplasm. Its function is as follows. General inhibitor of pancreatic serine proteases: inhibits chymotrypsin, trypsin, elastases, factor X, kallikrein as well as a variety of other proteases. This chain is Ecotin, found in Yersinia enterocolitica serotype O:8 / biotype 1B (strain NCTC 13174 / 8081).